We begin with the raw amino-acid sequence, 142 residues long: Hemoglobin subunit alpha-1 (142 aa).

The region spanning 2-142 is the Globin domain; it reads VLSPADKTNV…VSTVLTSKYR (141 aa). An O2-binding site is contributed by His59. Residue His88 coordinates heme b.

Belongs to the globin family. As to quaternary structure, heterotetramer of two alpha chains and two beta chains. Red blood cells.

In terms of biological role, involved in oxygen transport from the lung to the various peripheral tissues. Hemopressin acts as an antagonist peptide of the cannabinoid receptor CNR1. Hemopressin-binding efficiently blocks cannabinoid receptor CNR1 and subsequent signaling. The chain is Hemoglobin subunit alpha-1 (HBA1) from Hylobates lar (Lar gibbon).